The sequence spans 382 residues: ATP phosphoribosyltransferase regulatory subunit (382 aa).

This sequence belongs to the class-II aminoacyl-tRNA synthetase family. HisZ subfamily. In terms of assembly, heteromultimer composed of HisG and HisZ subunits.

The protein resides in the cytoplasm. It participates in amino-acid biosynthesis; L-histidine biosynthesis; L-histidine from 5-phospho-alpha-D-ribose 1-diphosphate: step 1/9. In terms of biological role, required for the first step of histidine biosynthesis. May allow the feedback regulation of ATP phosphoribosyltransferase activity by histidine. In Acidovorax ebreus (strain TPSY) (Diaphorobacter sp. (strain TPSY)), this protein is ATP phosphoribosyltransferase regulatory subunit.